Here is a 192-residue protein sequence, read N- to C-terminus: Ribosomal RNA large subunit methyltransferase E (192 aa).

5 residues coordinate S-adenosyl-L-methionine: Gly46, Trp48, Asp63, Asp79, and Asp102. Lys142 acts as the Proton acceptor in catalysis.

It belongs to the class I-like SAM-binding methyltransferase superfamily. RNA methyltransferase RlmE family.

The protein localises to the cytoplasm. It catalyses the reaction uridine(2552) in 23S rRNA + S-adenosyl-L-methionine = 2'-O-methyluridine(2552) in 23S rRNA + S-adenosyl-L-homocysteine + H(+). In terms of biological role, specifically methylates the uridine in position 2552 of 23S rRNA at the 2'-O position of the ribose in the fully assembled 50S ribosomal subunit. The chain is Ribosomal RNA large subunit methyltransferase E from Wolbachia pipientis wMel.